We begin with the raw amino-acid sequence, 171 residues long: Large ribosomal subunit protein uL10 (171 aa).

This sequence belongs to the universal ribosomal protein uL10 family. As to quaternary structure, part of the ribosomal stalk of the 50S ribosomal subunit. The N-terminus interacts with L11 and the large rRNA to form the base of the stalk. The C-terminus forms an elongated spine to which L12 dimers bind in a sequential fashion forming a multimeric L10(L12)X complex.

Forms part of the ribosomal stalk, playing a central role in the interaction of the ribosome with GTP-bound translation factors. The chain is Large ribosomal subunit protein uL10 from Hyphomonas neptunium (strain ATCC 15444).